A 517-amino-acid chain; its full sequence is Cytochrome P450 monooxygenase sdnE (517 aa).

Residues 4–24 (SSILQTLAVLYVLYLLGLIIY) traverse the membrane as a helical segment. N-linked (GlcNAc...) asparagine glycosylation occurs at Asn-111. The helical transmembrane segment at 219 to 239 (FPVVFIILGLSPRAMLKLVVP) threads the bilayer. Residue Cys-456 coordinates heme.

The protein belongs to the cytochrome P450 family. Heme is required as a cofactor.

It is found in the membrane. It functions in the pathway antibiotic biosynthesis. Cytochrome P450 monooxygenase; part of the gene cluster that mediates the biosynthesis of sordarin and hypoxysordarin, glycoside antibiotics with a unique tetracyclic diterpene aglycone structure. First, the geranylgeranyl diphosphate synthase sdnC constructs GGDP from farnesyl diphosphate and isopentenyl diphosphate. The diterpene cyclase sdnA then catalyzes the cyclization of GGDP to afford cycloaraneosene. Cycloaraneosene is then hydroxylated four times by the putative cytochrome P450 monooxygenases sdnB, sdnE, sdnF and sdnH to give a hydroxylated cycloaraneosene derivative such as cycloaraneosene-8,9,13,19-tetraol. Although the order of the hydroxylations is unclear, at least C8, C9 and C13 of the cycloaraneosene skeleton are hydroxylated before the sordaricin formation. Dehydration of the 13-hydroxy group of the hydroxylated cycloaraneosene derivative might be catalyzed by an unassigned hypothetical protein such as sdnG and sdnP to construct the cyclopentadiene moiety. The FAD-dependent oxidoreductase sdnN is proposed to catalyze the oxidation at C9 of the hydroxylated cycloaraneosene derivative and also catalyze the Baeyer-Villiger oxidation to give the lactone intermediate. The presumed lactone intermediate would be hydrolyzed to give an acrolein moiety and a carboxylate moiety. Then, [4+2]cycloaddition would occur between the acrolein moiety and the cyclopentadiene moiety to give sordaricin. SdnN might also be involved in the [4+2]cycloaddition after the hypothesized oxidation to accommodate the oxidized product and prompt the [4+2]cycloaddition. GDP-6-deoxy-D-altrose may be biosynthesized from GDP-D-mannose by the putative GDP-mannose-4,6-dehydratase sdnI and the short-chain dehydrogenase sdnK. The glycosyltransferase sdnJ catalyzes the attachment of 6-deoxy-D-altrose onto the 19-hydroxy group of sordaricin to give 4'-O-demethylsordarin. The methyltransferase sdnD would complete the biosynthesis of sordarin. Sordarin can be further modified into hypoxysordarin. The unique acyl chain at the 3'-hydroxy group of hypoxysordarin would be constructed by an iterative type I PKS sdnO and the trans-acting polyketide methyltransferase sdnL. SdnL would be responsible for the introduction of an alpha-methyl group of the polyketide chain. Alternatively, the beta-lactamase-like protein sdnR might be responsible for the cleavage and transfer of the polyketide chain from the PKS sdnO to sordarin. Two putative cytochrome P450 monooxygenases, sdnQ and sdnT, might catalyze the epoxidations of the polyketide chain to complete the biosynthesis of hypoxysordarin. Transcriptional regulators sdnM and sdnS are presumably encoded for the transcriptional regulation of the expression of the sdn gene cluster. This chain is Cytochrome P450 monooxygenase sdnE, found in Sordaria araneosa (Pleurage araneosa).